The sequence spans 342 residues: L-threonine 3-dehydrogenase (342 aa).

Cys-38 provides a ligand contact to Zn(2+). Residues Thr-40 and His-43 each act as charge relay system in the active site. Zn(2+)-binding residues include His-63, Glu-64, Cys-93, Cys-96, Cys-99, and Cys-107. NAD(+) contacts are provided by residues Ile-175, Asp-195, Arg-200, 262-264 (LGI), and 286-287 (IY).

This sequence belongs to the zinc-containing alcohol dehydrogenase family. As to quaternary structure, homotetramer. Zn(2+) serves as cofactor.

Its subcellular location is the cytoplasm. It carries out the reaction L-threonine + NAD(+) = (2S)-2-amino-3-oxobutanoate + NADH + H(+). It functions in the pathway amino-acid degradation; L-threonine degradation via oxydo-reductase pathway; glycine from L-threonine: step 1/2. Catalyzes the NAD(+)-dependent oxidation of L-threonine to 2-amino-3-ketobutyrate. The protein is L-threonine 3-dehydrogenase of Burkholderia multivorans (strain ATCC 17616 / 249).